The sequence spans 1134 residues: Spermatogenesis-associated protein 31C2 (1134 aa).

Residues 23 to 43 (PWVLDIFLTLVFALGFFFLLL) form a helical membrane-spanning segment. Disordered stretches follow at residues 54 to 87 (PPSP…NHSL), 115 to 243 (LEKG…LLTP), 477 to 504 (PGTS…EAQT), 524 to 561 (TPQN…DSGS), 727 to 807 (MPER…PTVP), 928 to 1007 (NMGH…PSIS), and 1111 to 1134 (AASS…IRDQ). A compositionally biased stretch (basic residues) spans 59–87 (PKKRKRHLVSQRPAGRRGRPRGRMKNHSL). Residues 132–148 (VGKRTPDGASRSSHEPT) are compositionally biased toward basic and acidic residues. Residues 185–201 (SSLSASQPPEPSLLLEH) show a composition bias toward low complexity. Pro residues predominate over residues 204–235 (PEPPALFPHPPRTPDPLACSPPPPKGFTPPPL). Over residues 489–504 (WQSSTSTGESSKEAQT) the composition is skewed to polar residues. 2 stretches are compositionally biased toward polar residues: residues 773 to 794 (LTYS…SSRA) and 937 to 948 (PNCQGSCKSQSP). A compositionally biased stretch (basic and acidic residues) spans 954–970 (HKRENSRKPNLEKHEEM). The segment covering 1111 to 1124 (AASSQQATLKNQSR) has biased composition (polar residues). A compositionally biased stretch (basic and acidic residues) spans 1125–1134 (PNRDRQIRDQ).

It belongs to the SPATA31 family.

The protein localises to the membrane. Its function is as follows. May play a role in spermatogenesis. This Homo sapiens (Human) protein is Spermatogenesis-associated protein 31C2 (SPATA31C2).